Reading from the N-terminus, the 159-residue chain is MQQGWLSNWLVKHEVVHRSLGFDHRGIETLQIKAGDWDSIAVILYVYGYNYLRSQCAYDVAPGGSLASVYHLTRIQYGIDNPEEVCIKVFAQKDNPRIPSVFWIWRSADFQERESYDMVGISYDNHPRLKRILMPESWIGWPLRKDYITPNFYEIQDAH.

The protein belongs to the complex I 30 kDa subunit family. In terms of assembly, NDH is composed of at least 16 different subunits, 5 of which are encoded in the nucleus.

It is found in the plastid. Its subcellular location is the chloroplast thylakoid membrane. It carries out the reaction a plastoquinone + NADH + (n+1) H(+)(in) = a plastoquinol + NAD(+) + n H(+)(out). The enzyme catalyses a plastoquinone + NADPH + (n+1) H(+)(in) = a plastoquinol + NADP(+) + n H(+)(out). In terms of biological role, NDH shuttles electrons from NAD(P)H:plastoquinone, via FMN and iron-sulfur (Fe-S) centers, to quinones in the photosynthetic chain and possibly in a chloroplast respiratory chain. The immediate electron acceptor for the enzyme in this species is believed to be plastoquinone. Couples the redox reaction to proton translocation, and thus conserves the redox energy in a proton gradient. The sequence is that of NAD(P)H-quinone oxidoreductase subunit J, chloroplastic from Triticum aestivum (Wheat).